The sequence spans 395 residues: S-adenosylmethionine synthase (395 aa).

An ATP-binding site is contributed by His14. Asp16 provides a ligand contact to Mg(2+). K(+) is bound at residue Glu42. L-methionine-binding residues include Glu55 and Gln98. Residues 98-108 (QSPDIALGVDK) form a flexible loop region. ATP contacts are provided by residues 175–177 (DGK), 242–243 (RF), Asp251, 257–258 (RK), Ala274, and Lys278. An L-methionine-binding site is contributed by Asp251. Lys282 is a binding site for L-methionine.

Belongs to the AdoMet synthase family. As to quaternary structure, homotetramer; dimer of dimers. Requires Mg(2+) as cofactor. K(+) is required as a cofactor.

Its subcellular location is the cytoplasm. It catalyses the reaction L-methionine + ATP + H2O = S-adenosyl-L-methionine + phosphate + diphosphate. Its pathway is amino-acid biosynthesis; S-adenosyl-L-methionine biosynthesis; S-adenosyl-L-methionine from L-methionine: step 1/1. Functionally, catalyzes the formation of S-adenosylmethionine (AdoMet) from methionine and ATP. The overall synthetic reaction is composed of two sequential steps, AdoMet formation and the subsequent tripolyphosphate hydrolysis which occurs prior to release of AdoMet from the enzyme. The chain is S-adenosylmethionine synthase from Thermosipho africanus (strain TCF52B).